Reading from the N-terminus, the 189-residue chain is GTP cyclohydrolase 1 (189 aa).

Zn(2+) is bound by residues Cys78, His81, and Cys150.

The protein belongs to the GTP cyclohydrolase I family. In terms of assembly, homomer.

The enzyme catalyses GTP + H2O = 7,8-dihydroneopterin 3'-triphosphate + formate + H(+). Its pathway is cofactor biosynthesis; 7,8-dihydroneopterin triphosphate biosynthesis; 7,8-dihydroneopterin triphosphate from GTP: step 1/1. This is GTP cyclohydrolase 1 from Bacillus cytotoxicus (strain DSM 22905 / CIP 110041 / 391-98 / NVH 391-98).